Here is a 329-residue protein sequence, read N- to C-terminus: DNA-directed RNA polymerase subunit alpha (329 aa).

Residues 1–235 (MQGSVTEFLK…EQLDAFVDLR (235 aa)) form an alpha N-terminal domain (alpha-NTD) region. Positions 249 to 329 (FDPILLRPVD…NWPPASIAED (81 aa)) are alpha C-terminal domain (alpha-CTD).

Belongs to the RNA polymerase alpha chain family. As to quaternary structure, homodimer. The RNAP catalytic core consists of 2 alpha, 1 beta, 1 beta' and 1 omega subunit. When a sigma factor is associated with the core the holoenzyme is formed, which can initiate transcription.

The enzyme catalyses RNA(n) + a ribonucleoside 5'-triphosphate = RNA(n+1) + diphosphate. Functionally, DNA-dependent RNA polymerase catalyzes the transcription of DNA into RNA using the four ribonucleoside triphosphates as substrates. This is DNA-directed RNA polymerase subunit alpha from Actinobacillus pleuropneumoniae serotype 5b (strain L20).